Consider the following 464-residue polypeptide: tRNA modification GTPase MnmE (464 aa).

Positions 25, 87, and 130 each coordinate (6S)-5-formyl-5,6,7,8-tetrahydrofolate. The region spanning 226–386 (GLSVVLAGQP…LRAELLRIAG (161 aa)) is the TrmE-type G domain. Position 236 (Asn236) interacts with K(+). GTP-binding positions include 236 to 241 (NVGKSS), 255 to 261 (TPIAGTT), and 280 to 283 (DTAG). Ser240 is a binding site for Mg(2+). K(+) is bound by residues Thr255, Ile257, and Thr260. Thr261 contributes to the Mg(2+) binding site. Lys464 contributes to the (6S)-5-formyl-5,6,7,8-tetrahydrofolate binding site.

The protein belongs to the TRAFAC class TrmE-Era-EngA-EngB-Septin-like GTPase superfamily. TrmE GTPase family. In terms of assembly, homodimer. Heterotetramer of two MnmE and two MnmG subunits. It depends on K(+) as a cofactor.

The protein resides in the cytoplasm. Functionally, exhibits a very high intrinsic GTPase hydrolysis rate. Involved in the addition of a carboxymethylaminomethyl (cmnm) group at the wobble position (U34) of certain tRNAs, forming tRNA-cmnm(5)s(2)U34. This chain is tRNA modification GTPase MnmE, found in Burkholderia ambifaria (strain MC40-6).